Reading from the N-terminus, the 59-residue chain is UPF0434 protein Rsph17025_2896 (59 aa).

The protein belongs to the UPF0434 family.

The chain is UPF0434 protein Rsph17025_2896 from Cereibacter sphaeroides (strain ATCC 17025 / ATH 2.4.3) (Rhodobacter sphaeroides).